A 73-amino-acid polypeptide reads, in one-letter code: Protein RALF-like 10 (73 aa).

Residues 1–17 form the signal peptide; the sequence is MKALVICLLVIFAAVIA. Intrachain disulfides connect Cys35–Cys44 and Cys64–Cys70.

Belongs to the plant rapid alkalinization factor (RALF) family. In terms of tissue distribution, expressed in flowers.

The protein resides in the secreted. Its function is as follows. Cell signaling peptide that may regulate plant stress, growth, and development. Mediates a rapid alkalinization of extracellular space by mediating a transient increase in the cytoplasmic Ca(2+) concentration leading to a calcium-dependent signaling events through a cell surface receptor and a concomitant activation of some intracellular mitogen-activated protein kinases. The chain is Protein RALF-like 10 (RALFL10) from Arabidopsis thaliana (Mouse-ear cress).